Here is a 301-residue protein sequence, read N- to C-terminus: Pyridoxal 5'-phosphate synthase subunit PdxS (301 aa).

Aspartate 31 contacts D-ribose 5-phosphate. Lysine 88 (schiff-base intermediate with D-ribose 5-phosphate) is an active-site residue. Glycine 160 serves as a coordination point for D-ribose 5-phosphate. Lysine 172 is a binding site for D-glyceraldehyde 3-phosphate. Residues glycine 221 and 242–243 each bind D-ribose 5-phosphate; that span reads GS.

This sequence belongs to the PdxS/SNZ family. In terms of assembly, in the presence of PdxT, forms a dodecamer of heterodimers.

It carries out the reaction aldehydo-D-ribose 5-phosphate + D-glyceraldehyde 3-phosphate + L-glutamine = pyridoxal 5'-phosphate + L-glutamate + phosphate + 3 H2O + H(+). It functions in the pathway cofactor biosynthesis; pyridoxal 5'-phosphate biosynthesis. Functionally, catalyzes the formation of pyridoxal 5'-phosphate from ribose 5-phosphate (RBP), glyceraldehyde 3-phosphate (G3P) and ammonia. The ammonia is provided by the PdxT subunit. Can also use ribulose 5-phosphate and dihydroxyacetone phosphate as substrates, resulting from enzyme-catalyzed isomerization of RBP and G3P, respectively. The polypeptide is Pyridoxal 5'-phosphate synthase subunit PdxS (Methanosarcina acetivorans (strain ATCC 35395 / DSM 2834 / JCM 12185 / C2A)).